A 394-amino-acid polypeptide reads, in one-letter code: LL-diaminopimelate aminotransferase (394 aa).

Substrate-binding residues include Y14 and G41. Pyridoxal 5'-phosphate is bound by residues Y71, 104-105 (AK), Y128, N174, Y205, and 233-235 (SFS). Substrate contacts are provided by K105, Y128, and N174. N6-(pyridoxal phosphate)lysine is present on K236. Positions 244 and 275 each coordinate pyridoxal 5'-phosphate. 2 residues coordinate substrate: N275 and R369.

The protein belongs to the class-I pyridoxal-phosphate-dependent aminotransferase family. LL-diaminopimelate aminotransferase subfamily. Homodimer. The cofactor is pyridoxal 5'-phosphate.

The enzyme catalyses (2S,6S)-2,6-diaminopimelate + 2-oxoglutarate = (S)-2,3,4,5-tetrahydrodipicolinate + L-glutamate + H2O + H(+). It participates in amino-acid biosynthesis; L-lysine biosynthesis via DAP pathway; LL-2,6-diaminopimelate from (S)-tetrahydrodipicolinate (aminotransferase route): step 1/1. Its function is as follows. Involved in the synthesis of meso-diaminopimelate (m-DAP or DL-DAP), required for both lysine and peptidoglycan biosynthesis. Catalyzes the direct conversion of tetrahydrodipicolinate to LL-diaminopimelate. The chain is LL-diaminopimelate aminotransferase from Chlamydia trachomatis serovar L2b (strain UCH-1/proctitis).